The sequence spans 146 residues: Ribonuclease H (146 aa).

The RNase H type-1 domain maps to 1-141 (MKHVDIFTDG…ADELARKGME (141 aa)). Asp-9, Glu-47, Asp-69, and Asp-133 together coordinate Mg(2+). The tract at residues 123-146 (HAGHPENERADELARKGMEPFKRR) is disordered. Basic and acidic residues predominate over residues 125–146 (GHPENERADELARKGMEPFKRR).

This sequence belongs to the RNase H family. Monomer. Mg(2+) serves as cofactor.

It localises to the cytoplasm. The enzyme catalyses Endonucleolytic cleavage to 5'-phosphomonoester.. In terms of biological role, endonuclease that specifically degrades the RNA of RNA-DNA hybrids. The polypeptide is Ribonuclease H (Agrobacterium fabrum (strain C58 / ATCC 33970) (Agrobacterium tumefaciens (strain C58))).